Here is a 350-residue protein sequence, read N- to C-terminus: Peroxidase 10 (350 aa).

Positions 1 to 27 (MDHKMSMYLFVSYLAIFTLFFKGFVSS) are cleaved as a signal peptide. 4 disulfide bridges follow: Cys57-Cys137, Cys90-Cys95, Cys143-Cys346, and Cys222-Cys256. The active-site Proton acceptor is His88. Ca(2+) is bound by residues Asp89, Val92, Gly94, Asp96, and Ser98. The N-linked (GlcNAc...) asparagine glycan is linked to Asn102. A substrate-binding site is contributed by Pro185. The N-linked (GlcNAc...) asparagine glycan is linked to Asn193. Position 215 (His215) interacts with heme b. A Ca(2+)-binding site is contributed by Thr216. Positions 270, 273, and 278 each coordinate Ca(2+).

Belongs to the peroxidase family. Classical plant (class III) peroxidase subfamily. Heme b is required as a cofactor. Requires Ca(2+) as cofactor. In terms of tissue distribution, expressed in the whole plant, with the highest expression in roots.

The protein resides in the secreted. The catalysed reaction is 2 a phenolic donor + H2O2 = 2 a phenolic radical donor + 2 H2O. In terms of biological role, removal of H(2)O(2), oxidation of toxic reductants, biosynthesis and degradation of lignin, suberization, auxin catabolism, response to environmental stresses such as wounding, pathogen attack and oxidative stress. These functions might be dependent on each isozyme/isoform in each plant tissue. The protein is Peroxidase 10 (PER10) of Arabidopsis thaliana (Mouse-ear cress).